A 145-amino-acid chain; its full sequence is Lipoprotein signal peptidase (145 aa).

3 helical membrane passes run 1-21, 57-77, and 79-99; these read MVYI…LLVM, YLFI…YYKT, and GSGM…GNLI. Residues D109 and D123 contribute to the active site. The chain crosses the membrane as a helical span at residues 115 to 135; it reads IWPVFNLADSSVVIGAALLIL.

It belongs to the peptidase A8 family.

It is found in the cell inner membrane. It carries out the reaction Release of signal peptides from bacterial membrane prolipoproteins. Hydrolyzes -Xaa-Yaa-Zaa-|-(S,diacylglyceryl)Cys-, in which Xaa is hydrophobic (preferably Leu), and Yaa (Ala or Ser) and Zaa (Gly or Ala) have small, neutral side chains.. It participates in protein modification; lipoprotein biosynthesis (signal peptide cleavage). Functionally, this protein specifically catalyzes the removal of signal peptides from prolipoproteins. The sequence is that of Lipoprotein signal peptidase from Halothermothrix orenii (strain H 168 / OCM 544 / DSM 9562).